The sequence spans 55 residues: Large ribosomal subunit protein bL33 (55 aa).

This sequence belongs to the bacterial ribosomal protein bL33 family.

This is Large ribosomal subunit protein bL33 from Aliivibrio salmonicida (strain LFI1238) (Vibrio salmonicida (strain LFI1238)).